The sequence spans 231 residues: Flagellar L-ring protein (231 aa).

A signal peptide spans 1 to 18; that stretch reads MNRLMIVSLLGIATALGG. C19 carries the N-palmitoyl cysteine lipid modification. C19 carries S-diacylglycerol cysteine lipidation. The disordered stretch occupies residues 118–141; the sequence is LSLSAEYGGSRDAKGDSQAGQSNS.

The protein belongs to the FlgH family. As to quaternary structure, the basal body constitutes a major portion of the flagellar organelle and consists of four rings (L,P,S, and M) mounted on a central rod.

The protein resides in the cell outer membrane. It is found in the bacterial flagellum basal body. Assembles around the rod to form the L-ring and probably protects the motor/basal body from shearing forces during rotation. The sequence is that of Flagellar L-ring protein from Pseudomonas aeruginosa (strain UCBPP-PA14).